The chain runs to 153 residues: SsrA-binding protein (153 aa).

The tract at residues 131 to 153 (EYDKRDSIRERDDRREMDRAFKR) is disordered.

This sequence belongs to the SmpB family.

Its subcellular location is the cytoplasm. In terms of biological role, required for rescue of stalled ribosomes mediated by trans-translation. Binds to transfer-messenger RNA (tmRNA), required for stable association of tmRNA with ribosomes. tmRNA and SmpB together mimic tRNA shape, replacing the anticodon stem-loop with SmpB. tmRNA is encoded by the ssrA gene; the 2 termini fold to resemble tRNA(Ala) and it encodes a 'tag peptide', a short internal open reading frame. During trans-translation Ala-aminoacylated tmRNA acts like a tRNA, entering the A-site of stalled ribosomes, displacing the stalled mRNA. The ribosome then switches to translate the ORF on the tmRNA; the nascent peptide is terminated with the 'tag peptide' encoded by the tmRNA and targeted for degradation. The ribosome is freed to recommence translation, which seems to be the essential function of trans-translation. This is SsrA-binding protein from Parabacteroides distasonis (strain ATCC 8503 / DSM 20701 / CIP 104284 / JCM 5825 / NCTC 11152).